Here is a 137-residue protein sequence, read N- to C-terminus: Small ribosomal subunit protein uS12 (137 aa).

A disordered region spans residues 1-57; it reads MPTINQLVRKPRQSKSKKSDSPVLNRGFNSKKKQFTNLNSPQKRGVCTRVGTMTPRK. Asp-102 bears the 3-methylthioaspartic acid mark. Residues 118–137 are disordered; the sequence is SGVDGRRQGRSLYGTKKPKN.

The protein belongs to the universal ribosomal protein uS12 family. In terms of assembly, part of the 30S ribosomal subunit. Contacts proteins S8 and S17. May interact with IF1 in the 30S initiation complex.

In terms of biological role, with S4 and S5 plays an important role in translational accuracy. Interacts with and stabilizes bases of the 16S rRNA that are involved in tRNA selection in the A site and with the mRNA backbone. Located at the interface of the 30S and 50S subunits, it traverses the body of the 30S subunit contacting proteins on the other side and probably holding the rRNA structure together. The combined cluster of proteins S8, S12 and S17 appears to hold together the shoulder and platform of the 30S subunit. This chain is Small ribosomal subunit protein uS12, found in Staphylococcus haemolyticus (strain JCSC1435).